A 61-amino-acid polypeptide reads, in one-letter code: Weak toxin CM-2a (61 aa).

Disulfide bonds link Cys-3-Cys-19, Cys-12-Cys-37, Cys-41-Cys-49, and Cys-50-Cys-55.

The protein belongs to the three-finger toxin family. Short-chain subfamily. Orphan group XX sub-subfamily. As to expression, expressed by the venom gland.

It is found in the secreted. This is Weak toxin CM-2a from Naja annulifera (Banded Egyptian cobra).